The following is a 420-amino-acid chain: MVSKGLLRLVSSVNRRKMKLLLGIALFAYAASVWGNFVNMRSIQENGELKIESKIEEIIEPLREKIRDLEKSFTQKYPPVKFLSEKDRKRILITGGAGFVGSHLTDKLMMDGHEVTVVDNFFTGRKRNVEHWIGHENFELINHDVVEPLYIEVDQIYHLASPASPPNYMYNPIKTLKTNTIGTLNMLGLAKRVGARLLLASTSEVYGDPEVHPQSEDYWGHVNPIGPRACYDEGKRVAETMCYAYMKQEGVEVRVARIFNTFGPRMHMNDGRVVSNFILQALQGEPLTVYGSGSQTRAFQYVSDLVNGLVALMNSNVSSPVNLGNPEEHTILEFAQLIKNLVGSGSEIQFLSEAQDDPQKRKPDIKKAKLMLGWEPVVPLEEGLNKAIHYFRKELEYQANNQYIPKPKPARVKKGRTRHS.

M1 carries the post-translational modification N-acetylmethionine. The Cytoplasmic portion of the chain corresponds to 1 to 19 (MVSKGLLRLVSSVNRRKMK). Residues 20 to 40 (LLLGIALFAYAASVWGNFVNM) form a helical; Signal-anchor for type II membrane protein membrane-spanning segment. Residues 41–420 (RSIQENGELK…RVKKGRTRHS (380 aa)) lie on the Lumenal side of the membrane. T94 is modified (phosphothreonine). Positions 98, 99, 100, 119, 120, 122, 123, 124, 144, and 145 each coordinate NAD(+). L149 and Y150 together coordinate UDP-alpha-D-glucuronate. NAD(+)-binding residues include L159 and S161. Residue K177 coordinates UDP-alpha-D-glucuronate. T178 contributes to the NAD(+) binding site. The UDP-alpha-D-glucuronate site is built by N185, G188, K191, and R192. NAD(+) is bound by residues A200, Y231, and K235. The active-site Proton acceptor is Y231. UDP-alpha-D-glucuronate is bound by residues Y245, Q248, and E249. The NAD(+) site is built by T261, H267, and R272. N-linked (GlcNAc...) asparagine glycosylation is present at N316.

The protein belongs to the NAD(P)-dependent epimerase/dehydratase family. UDP-glucuronic acid decarboxylase subfamily. In terms of assembly, homodimer and homotetramer. Interacts with AKT1. The cofactor is NAD(+). In terms of tissue distribution, ubiquitous. Detected in heart, brain, spleen, lung, testis, liver, skeletal muscle and kidney.

The protein resides in the golgi apparatus. The protein localises to the golgi stack membrane. It catalyses the reaction UDP-alpha-D-glucuronate + H(+) = UDP-alpha-D-xylose + CO2. The protein operates within nucleotide-sugar biosynthesis; UDP-alpha-D-xylose biosynthesis; UDP-alpha-D-xylose from UDP-alpha-D-glucuronate: step 1/1. In terms of biological role, catalyzes the NAD-dependent decarboxylation of UDP-glucuronic acid to UDP-xylose. Necessary for the biosynthesis of the core tetrasaccharide in glycosaminoglycan biosynthesis. The polypeptide is UDP-glucuronic acid decarboxylase 1 (Rattus norvegicus (Rat)).